A 63-amino-acid chain; its full sequence is MAVCQICGKKTVFGNTVAHSATTERRTWKPNLRRVRVVLEDGSTKRIYVCAKCLKAGKVKKAV.

It belongs to the bacterial ribosomal protein bL28 family.

The chain is Large ribosomal subunit protein bL28 from Sulfurihydrogenibium sp. (strain YO3AOP1).